The primary structure comprises 130 residues: L-aspartate semialdehyde sulfurtransferase iron-sulfur subunit (130 aa).

2 consecutive 4Fe-4S ferredoxin-type domains span residues 72–101 (RPIHRDEEECVECGACISVCPMNVYSFDET) and 102–130 (WSLCVDEKKCIQCGMCIKMCPHGALKLGE). C81, C84, C87, C91, C111, C114, C117, and C121 together coordinate [4Fe-4S] cluster.

May form a complex with MA_1821. Requires [4Fe-4S] cluster as cofactor.

It participates in amino-acid biosynthesis. Required for O-acetylhomoserine sulfhydrylase (OAHS)-independent homocysteine (Hcy) biosynthesis. Together with MA_1821, catalyzes the condensation of sulfide with aspartate semialdehyde to generate homocysteine. May be involved in the reduction of the disulfide formed in MA_1821. The chain is L-aspartate semialdehyde sulfurtransferase iron-sulfur subunit from Methanosarcina acetivorans (strain ATCC 35395 / DSM 2834 / JCM 12185 / C2A).